The chain runs to 191 residues: Peptidyl-tRNA hydrolase (191 aa).

Y14 is a binding site for tRNA. The active-site Proton acceptor is the H19. TRNA-binding residues include F64, N66, and N112.

Belongs to the PTH family. In terms of assembly, monomer.

The protein localises to the cytoplasm. It carries out the reaction an N-acyl-L-alpha-aminoacyl-tRNA + H2O = an N-acyl-L-amino acid + a tRNA + H(+). In terms of biological role, hydrolyzes ribosome-free peptidyl-tRNAs (with 1 or more amino acids incorporated), which drop off the ribosome during protein synthesis, or as a result of ribosome stalling. Catalyzes the release of premature peptidyl moieties from peptidyl-tRNA molecules trapped in stalled 50S ribosomal subunits, and thus maintains levels of free tRNAs and 50S ribosomes. This is Peptidyl-tRNA hydrolase from Novosphingobium aromaticivorans (strain ATCC 700278 / DSM 12444 / CCUG 56034 / CIP 105152 / NBRC 16084 / F199).